A 171-amino-acid polypeptide reads, in one-letter code: CDP-archaeol synthase (171 aa).

The next 5 membrane-spanning stretches (helical) occupy residues 7–27 (MFWA…PVLL), 55–75 (FLGG…LTPA), 84–104 (VLLA…GSFI), 115–135 (PAVG…AYPV), and 141–161 (GQML…NYFA).

This sequence belongs to the CDP-archaeol synthase family. It depends on Mg(2+) as a cofactor.

The protein localises to the cell membrane. It carries out the reaction 2,3-bis-O-(geranylgeranyl)-sn-glycerol 1-phosphate + CTP + H(+) = CDP-2,3-bis-O-(geranylgeranyl)-sn-glycerol + diphosphate. The protein operates within membrane lipid metabolism; glycerophospholipid metabolism. Functionally, catalyzes the formation of CDP-2,3-bis-(O-geranylgeranyl)-sn-glycerol (CDP-archaeol) from 2,3-bis-(O-geranylgeranyl)-sn-glycerol 1-phosphate (DGGGP) and CTP. This reaction is the third ether-bond-formation step in the biosynthesis of archaeal membrane lipids. The chain is CDP-archaeol synthase from Thermococcus gammatolerans (strain DSM 15229 / JCM 11827 / EJ3).